The sequence spans 65 residues: MPKMKTHRGAAKRFRKTGTGKLKRGKAFRSHILTKKSSKTKRHLRKAGYVSDSQLKVMKKLLPYL.

The disordered stretch occupies residues 1 to 26; that stretch reads MPKMKTHRGAAKRFRKTGTGKLKRGK.

This sequence belongs to the bacterial ribosomal protein bL35 family.

The chain is Large ribosomal subunit protein bL35 from Clostridium beijerinckii (strain ATCC 51743 / NCIMB 8052) (Clostridium acetobutylicum).